Consider the following 246-residue polypeptide: Type III pantothenate kinase (246 aa).

6–13 (DVGNTHSV) serves as a coordination point for ATP. 103–106 (GADR) provides a ligand contact to substrate. The active-site Proton acceptor is D105. D125 provides a ligand contact to K(+). ATP is bound at residue T128. T179 is a substrate binding site.

The protein belongs to the type III pantothenate kinase family. In terms of assembly, homodimer. It depends on NH4(+) as a cofactor. K(+) serves as cofactor.

Its subcellular location is the cytoplasm. It carries out the reaction (R)-pantothenate + ATP = (R)-4'-phosphopantothenate + ADP + H(+). Its pathway is cofactor biosynthesis; coenzyme A biosynthesis; CoA from (R)-pantothenate: step 1/5. Its function is as follows. Catalyzes the phosphorylation of pantothenate (Pan), the first step in CoA biosynthesis. This Thermotoga maritima (strain ATCC 43589 / DSM 3109 / JCM 10099 / NBRC 100826 / MSB8) protein is Type III pantothenate kinase (coaX).